We begin with the raw amino-acid sequence, 694 residues long: Glycine--tRNA ligase beta subunit (694 aa).

It belongs to the class-II aminoacyl-tRNA synthetase family. Tetramer of two alpha and two beta subunits.

It localises to the cytoplasm. The catalysed reaction is tRNA(Gly) + glycine + ATP = glycyl-tRNA(Gly) + AMP + diphosphate. The protein is Glycine--tRNA ligase beta subunit of Lactiplantibacillus plantarum (strain ATCC BAA-793 / NCIMB 8826 / WCFS1) (Lactobacillus plantarum).